Reading from the N-terminus, the 82-residue chain is Turripeptide Gsg9.1 (82 aa).

Positions 1–23 (MMAKLMITVMTVFFLSLQQGADG) are cleaved as a signal peptide. The propeptide occupies 24 to 46 (LFERWRKNQMAASRIMGNLITAR). 4-hydroxyproline is present on residues Pro49 and Pro50. Cystine bridges form between Cys53-Cys68, Cys58-Cys72, and Cys64-Cys79. 4-carboxyglutamate is present on residues Glu60 and Glu63.

The protein belongs to the Pg turripeptide superfamily. Expressed by the venom duct.

It localises to the secreted. This Gemmula sogodensis (Gem-turris) protein is Turripeptide Gsg9.1.